A 70-amino-acid polypeptide reads, in one-letter code: MTIIRVKENEPFEVAMRRFKRTIEKNGLLTELRAREFYEKPTAERKRKKAAAVKRHYKRIRSQMLPKKLY.

The protein belongs to the bacterial ribosomal protein bS21 family.

The sequence is that of Small ribosomal subunit protein bS21C from Burkholderia pseudomallei (strain 1710b).